The sequence spans 119 residues: Beta-2-microglobulin (119 aa).

The first 20 residues, methionine 1 to alanine 20, serve as a signal peptide directing secretion. The Ig-like C1-type domain maps to proline 25–lysine 114. Cysteine 45 and cysteine 100 are joined by a disulfide.

The protein belongs to the beta-2-microglobulin family. In terms of assembly, heterodimer of an alpha chain and a beta chain. Beta-2-microglobulin is the beta-chain of major histocompatibility complex class I molecules.

It is found in the secreted. Functionally, component of the class I major histocompatibility complex (MHC). Involved in the presentation of peptide antigens to the immune system. The chain is Beta-2-microglobulin (B2M) from Saimiri boliviensis boliviensis (Bolivian squirrel monkey).